We begin with the raw amino-acid sequence, 471 residues long: Glutamate--tRNA ligase (471 aa).

Residues 9 to 19 (PSPTGYLHVGG) carry the 'HIGH' region motif. Zn(2+)-binding residues include Cys98, Cys100, Cys125, and His127. The 'KMSKS' region signature appears at 237–241 (KLSKR). An ATP-binding site is contributed by Lys240.

This sequence belongs to the class-I aminoacyl-tRNA synthetase family. Glutamate--tRNA ligase type 1 subfamily. Monomer. Zn(2+) is required as a cofactor.

The protein localises to the cytoplasm. The enzyme catalyses tRNA(Glu) + L-glutamate + ATP = L-glutamyl-tRNA(Glu) + AMP + diphosphate. Catalyzes the attachment of glutamate to tRNA(Glu) in a two-step reaction: glutamate is first activated by ATP to form Glu-AMP and then transferred to the acceptor end of tRNA(Glu). The sequence is that of Glutamate--tRNA ligase from Enterobacter sp. (strain 638).